The following is a 156-amino-acid chain: Small ribosomal subunit protein uS7 (156 aa).

This sequence belongs to the universal ribosomal protein uS7 family. As to quaternary structure, part of the 30S ribosomal subunit. Contacts proteins S9 and S11.

One of the primary rRNA binding proteins, it binds directly to 16S rRNA where it nucleates assembly of the head domain of the 30S subunit. Is located at the subunit interface close to the decoding center, probably blocks exit of the E-site tRNA. The sequence is that of Small ribosomal subunit protein uS7 from Lactobacillus acidophilus (strain ATCC 700396 / NCK56 / N2 / NCFM).